The sequence spans 509 residues: Circadian clock oscillator protein KaiC (509 aa).

KaiC domains are found at residues 1–243 (MKDK…IIVF) and 257–509 (IRIS…IEKN). ATP-binding residues include G45, T46, G47, K48, T49, S85, K220, L221, R222, T224, H226, D237, T286, G287, T288, G289, K290, and T291. T49 is a Mg(2+) binding site. Mg(2+)-binding residues include T291 and E314. Position 327 (W327) interacts with ATP. At S427 the chain carries Phosphoserine; by autocatalysis. A Phosphothreonine; by autocatalysis modification is found at T428. R447, K453, M454, R455, S457, H459, and K461 together coordinate ATP.

It belongs to the KaiC family. In terms of assembly, homohexamer; hexamerization is dependent on ATP-binding. Component of the KaiBC complex. KaiC interacts with SasA, activating its autokinase function and leading to RpaA activation. It depends on Mg(2+) as a cofactor. Post-translationally, phosphorylated on serine and threonine residues by autocatalysis. Has a 4 step phosphorylation cycle; the autokinase acts first on Thr-428, then Ser-427. When Ser-427 is modified KaiC switches to an autophosphatase mode, acting first on phospho-Thr-428 then phospho-Ser-427.

It catalyses the reaction L-seryl-[protein] + ATP = O-phospho-L-seryl-[protein] + ADP + H(+). It carries out the reaction L-threonyl-[protein] + ATP = O-phospho-L-threonyl-[protein] + ADP + H(+). The enzyme catalyses ATP + H2O = ADP + phosphate + H(+). Central component of the KaiBC oscillator complex, which constitutes the main circadian regulator in cyanobacteria. Its composition changes during the circadian cycle to control KaiC phosphorylation. Autophosphorylates and has a weak ATPase activity; ATPase activity defines the circadian period. This Prochlorococcus marinus subsp. pastoris (strain CCMP1986 / NIES-2087 / MED4) protein is Circadian clock oscillator protein KaiC.